Here is a 295-residue protein sequence, read N- to C-terminus: Protease HtpX (295 aa).

2 consecutive transmembrane segments (helical) span residues Ile4–Leu24 and Gln42–Ser62. His147 is a binding site for Zn(2+). The active site involves Glu148. His151 provides a ligand contact to Zn(2+). A run of 2 helical transmembrane segments spans residues Val158–Ile178 and Ile199–Phe219. Position 224 (Glu224) interacts with Zn(2+).

It belongs to the peptidase M48B family. Zn(2+) serves as cofactor.

It localises to the cell inner membrane. This chain is Protease HtpX, found in Pseudomonas syringae pv. syringae (strain B728a).